The sequence spans 315 residues: MSQTTPAVRTFQDLILALQNYWAEQGCVVLQPYDMEVGAGTFHTATFLRAIGPETWNAAYVQPSRRPTDGRYGENPNRLQHYYQFQVVLKPNPENFQELYLGSLKAIGIDPLVHDIRFVEDNWESPTLGAWGLGWEIWLNGMEVTQFTYFQQVGGIECYPVTGEITYGLERLAMYLQGVDSVYDLVWTDGPFGKVTYGDVFHQNEVEQSTFNFEHANVPKLFELFDFYESEANRLIALELPLPTYEMVLKASHTFNLLDARRAISVTERQRYILRVRTLARAVAQSYLQARARLGFPMATPELRDEVLAKLKEAE.

This sequence belongs to the class-II aminoacyl-tRNA synthetase family. Tetramer of two alpha and two beta subunits.

It localises to the cytoplasm. The catalysed reaction is tRNA(Gly) + glycine + ATP = glycyl-tRNA(Gly) + AMP + diphosphate. The polypeptide is Glycine--tRNA ligase alpha subunit (Pseudomonas aeruginosa (strain LESB58)).